A 246-amino-acid chain; its full sequence is Acetylglutamate kinase (246 aa).

Substrate is bound by residues 30-31 (GG), Arg-52, and Asn-151.

The protein belongs to the acetylglutamate kinase family. ArgB subfamily.

Its subcellular location is the cytoplasm. It catalyses the reaction N-acetyl-L-glutamate + ATP = N-acetyl-L-glutamyl 5-phosphate + ADP. Its pathway is amino-acid biosynthesis; L-arginine biosynthesis; N(2)-acetyl-L-ornithine from L-glutamate: step 2/4. Catalyzes the ATP-dependent phosphorylation of N-acetyl-L-glutamate. This chain is Acetylglutamate kinase, found in Methanopyrus kandleri (strain AV19 / DSM 6324 / JCM 9639 / NBRC 100938).